A 169-amino-acid chain; its full sequence is uncharacterized protein (169 aa).

Transmembrane regions (helical) follow at residues 62–84 and 94–116; these read RWGF…LLGL and ALML…YWWF.

The protein resides in the cell membrane. This is an uncharacterized protein from Archaeoglobus fulgidus (strain ATCC 49558 / DSM 4304 / JCM 9628 / NBRC 100126 / VC-16).